The sequence spans 1114 residues: Kinesin-like protein KIN-12B (1114 aa).

The interval 1-119 (MRSLFSSKLS…GGGGGDSGVQ (119 aa)) is disordered. The span at 98-107 (SAASPAPEGA) shows a compositional bias: low complexity. A Kinesin motor domain is found at 117–459 (GVQVVVRVRP…LRFAHRAKDI (343 aa)). 197–204 (GQTGSGKT) contributes to the ATP binding site. Coiled coils occupy residues 772–810 (VLSA…KNQL) and 999–1043 (ELLV…DQEV). Residues 1055–1065 (LPSNVVQSPEP) are compositionally biased toward polar residues. A disordered region spans residues 1055 to 1081 (LPSNVVQSPEPSETGPARYDTGGSFGD).

This sequence belongs to the TRAFAC class myosin-kinesin ATPase superfamily. Kinesin family. KIN-12 subfamily.

The polypeptide is Kinesin-like protein KIN-12B (Oryza sativa subsp. japonica (Rice)).